Here is a 66-residue protein sequence, read N- to C-terminus: Large ribosomal subunit protein bL33c (66 aa).

The protein belongs to the bacterial ribosomal protein bL33 family.

It localises to the plastid. The protein localises to the chloroplast. This is Large ribosomal subunit protein bL33c from Dioscorea elephantipes (Elephant's foot yam).